The primary structure comprises 915 residues: WD repeat-containing protein 44 (915 aa).

The span at 1 to 14 shows a compositional bias: acidic residues; the sequence is MASESDTEEFYDAP. A disordered region spans residues 1–24; it reads MASESDTEEFYDAPEDVHLGTGYP. N-acetylalanine is present on alanine 2. The segment at 2 to 173 is binding activity; it reads ASESDTEEFY…SSGEQLDASG (172 aa). Phosphoserine is present on serine 3. The FFAT-like motif motif lies at 9–15; sequence EFYDAPE. Tyrosine 11 is modified (phosphotyrosine). 6 positions are modified to phosphoserine: serine 27, serine 50, serine 66, serine 71, serine 81, and serine 126. Disordered regions lie at residues 79-102, 117-174, and 208-282; these read DDSL…VAGT, LQQD…ASGL, and VEEV…PKEN. The stretch at 114–139 forms a coiled coil; that stretch reads EHELQQDSEKAESQNVAEESELETQK. Positions 146-155 are enriched in basic and acidic residues; it reads TCEKSEKTVD. Phosphothreonine is present on residues threonine 161 and threonine 221. The tract at residues 213–259 is important for interaction with ARHGAP26 AND ARHGAP10; the sequence is PAKPPRHLTPEPDIVASTKKPVPARPPPPTNFPPPRPPPPSRPAPPP. The span at 235–258 shows a compositional bias: pro residues; it reads PARPPPPTNFPPPRPPPPSRPAPP. Serine 264 carries the post-translational modification Phosphoserine. Residues 264–280 are compositionally biased toward basic and acidic residues; the sequence is SELEFEALKTPDLDVPK. The residue at position 273 (threonine 273) is a Phosphothreonine. Residues 336–349 are important for interaction with RAB11A; it reads VMGPQRPRSNSGRE. Serine 344 and serine 346 each carry phosphoserine. A phosphothreonine mark is found at threonine 351 and threonine 403. Disordered stretches follow at residues 399–425 and 461–481; these read SNDA…RLKQ and DEVF…GMPY. 4 positions are modified to phosphoserine: serine 405, serine 472, serine 473, and serine 474. Acidic residues predominate over residues 469–478; the sequence is DDPSSSDDEG. Tyrosine 481 bears the Phosphotyrosine mark. The WD 1 repeat unit spans residues 511 to 550; the sequence is EHMGAVWTMKFSHCGRLLASAGQDNIVRIWALKNAFDYFN. The interval 559 to 593 is disordered; sequence EGRVSPSPSQESLSSSKSDTDMGVCSGTDEDPDDK. 2 positions are modified to phosphoserine: serine 563 and serine 567. The segment covering 563-575 has biased composition (low complexity); it reads SPSPSQESLSSSK. WD repeat units lie at residues 607–645, 647–687, 692–731, 742–781, 786–825, 840–880, and 882–915; these read GHTA…CLCC, QHID…VALW, GQTK…YHTQ, KVGR…LSMK, VNSS…SKFT, AHNA…EVLD, and TSTG…KTVS.

As to quaternary structure, interacts with the GTP-bound form of RAB11 when membrane-associated. Interacts with GRAF1/ARHGAP26 or GRAF2/ARHGAP10; the interaction connects the endoplasmic reticulum (ER) with the endosomal tubule. Interacts (via FFAT-like motif) with VAPA (via MSP domain) or VAPB (via MSP domain); the interaction connects the ER with the endosomal tubule. Does not bind to other Rab and Rho small G proteins. In terms of processing, phosphorylated by ATK1; the phosphorylation stabilizes its interaction with RAB11A and RAB11B.

The protein localises to the cytoplasm. Its subcellular location is the cytosol. It is found in the perinuclear region. The protein resides in the endosome membrane. It localises to the golgi apparatus. The protein localises to the trans-Golgi network. Its function is as follows. Downstream effector for Rab11 which regulates Rab11 intracellular membrane trafficking functions such as endocytic recycling, intracellular ciliogenesis and protein export. ATK1-mediated phosphorylation of WDR44 induces binding to Rab11 which activates endocytic recycling of transferrin receptor back to the plasma membrane. When bound to Rab11, prevents the formation of the ciliogenic Rab11-Rabin8/RAB3IP-RAB11FIP3 complex, therefore inhibiting preciliary trafficking and ciliogenesis. Participates in neo-synthesized protein export by connecting the endoplasmic reticulum (ER) with the endosomal tubule via direct interactions with the integral ER proteins VAPA or VAPB and the endosomal protein GRAFs (GRAF1/ARHGAP26 or GRAF2/ARHGAP10), which facilitates the transfer of proteins such as E-cadherin, MPP14 and CFTR into a Rab8-Rab10-Rab11-dependent export route. The sequence is that of WD repeat-containing protein 44 from Mus musculus (Mouse).